A 447-amino-acid polypeptide reads, in one-letter code: Oxysterols receptor LXR-alpha (447 aa).

Disordered stretches follow at residues 1-37 and 65-88; these read MSLWLGAPVPDIPPDSAVELWKPGAQDASSQAQGGSS and ALLTRAEPPSEPTEIRPQKRKKGP. The interval 1-96 is transactivation AF-1; required for ligand-independent transactivation function; the sequence is MSLWLGAPVP…GPAPKMLGNE (96 aa). Low complexity predominate over residues 24–37; that stretch reads GAQDASSQAQGGSS. The nuclear receptor DNA-binding region spans 95 to 170; the sequence is NELCSVCGDK…AGMREECVLS (76 aa). 2 consecutive NR C4-type zinc fingers follow at residues 98-118 and 134-158; these read CSVCGDKASGFHYNVLSCEGC and CHSGGHCPMDTYMRRKCQECRLRKC. The segment at 180 to 202 is disordered; sequence KRQEEEQAHATSLPPRASSPPQI. The tract at residues 205 to 447 is transactivation AF-2; required for ligand-dependent transactivation function; mediates interaction with CCAR2; that stretch reads QLSPEQLGMI…LLSEIWDVHE (243 aa). The 239-residue stretch at 209–447 folds into the NR LBD domain; it reads EQLGMIEKLV…LLSEIWDVHE (239 aa).

It belongs to the nuclear hormone receptor family. NR1 subfamily. Heterodimer of NR1H3 and RXR (retinoic acid receptor). Interacts with CCAR2 (via N-terminus) in a ligand-independent manner. Interacts with SIRT1 and this interaction is inhibited by CCAR2. Interacts with GPS2. Post-translationally, ubiquitinated by UBR5, leading to its degradation: UBR5 specifically recognizes and binds ligand-bound NR1H3 when it is not associated with coactivators (NCOAs). In presence of NCOAs, the UBR5-degron is not accessible, preventing its ubiquitination and degradation. Visceral organs specific expression. Strong expression was found in liver, kidney and intestine followed by spleen and to a lesser extent the adrenals.

It is found in the nucleus. It localises to the cytoplasm. In terms of biological role, nuclear receptor that exhibits a ligand-dependent transcriptional activation activity. Interaction with retinoic acid receptor (RXR) shifts RXR from its role as a silent DNA-binding partner to an active ligand-binding subunit in mediating retinoid responses through target genes defined by LXRES. LXRES are DR4-type response elements characterized by direct repeats of two similar hexanuclotide half-sites spaced by four nucleotides. Plays an important role in the regulation of cholesterol homeostasis, regulating cholesterol uptake through MYLIP-dependent ubiquitination of LDLR, VLDLR and LRP8. Interplays functionally with RORA for the regulation of genes involved in liver metabolism. Induces LPCAT3-dependent phospholipid remodeling in endoplasmic reticulum (ER) membranes of hepatocytes, driving SREBF1 processing and lipogenesis. Via LPCAT3, triggers the incorporation of arachidonate into phosphatidylcholines of ER membranes, increasing membrane dynamics and enabling triacylglycerols transfer to nascent very low-density lipoprotein (VLDL) particles. Via LPCAT3 also counteracts lipid-induced ER stress response and inflammation, likely by modulating SRC kinase membrane compartmentalization and limiting the synthesis of lipid inflammatory mediators. The sequence is that of Oxysterols receptor LXR-alpha (NR1H3) from Homo sapiens (Human).